We begin with the raw amino-acid sequence, 125 residues long: MQTIEQQITNVIEESLIDMGFELVLVKFKGVNSKVVEILIDSLNSEKVSVEDCTKVSRTIPAILDVENLIEDASSLEVASSGLERPLVKFENYNRFLGREVKITLKELLNDKTSYQGKIIKAENK.

The protein belongs to the RimP family.

The protein resides in the cytoplasm. In terms of biological role, required for maturation of 30S ribosomal subunits. The chain is Ribosome maturation factor RimP from Rickettsia canadensis (strain McKiel).